The following is a 171-amino-acid chain: MSALSLSITKVSETFSEIYASRAQYLSGFKSVGEFLDVRRISRPRNFSEAQSRISFNFSRFSSNYLAIIAMLVIYALIRNPLLLIVIGIGVGGVYGIRKLQGADLQLSHRVISNQNLYVILACVLIPLGLFASPIETIIWLVGASCVCVFGHAAFFEPPVESAFETVEQQV.

3 consecutive transmembrane segments (helical) span residues 67–87, 119–139, and 140–160; these read AIIAMLVIYALIRNPLLLIVI, VILACVLIPLGLFASPIETII, and WLVGASCVCVFGHAAFFEPPV.

The protein belongs to the PRA1 family.

The protein resides in the membrane. In Schizosaccharomyces pombe (strain 972 / ATCC 24843) (Fission yeast), this protein is PRA1-like protein.